The chain runs to 162 residues: UPF0114 protein Sfri_3655 (162 aa).

3 helical membrane-spanning segments follow: residues 15 to 35 (IMAP…IKFF), 53 to 73 (LVLI…LIMV), and 136 to 156 (IMWY…MGYL).

Belongs to the UPF0114 family.

It localises to the cell membrane. The chain is UPF0114 protein Sfri_3655 from Shewanella frigidimarina (strain NCIMB 400).